The primary structure comprises 287 residues: Cysteine-rich repeat secretory protein 58 (287 aa).

The signal sequence occupies residues 1-20; the sequence is METTKKLFALLCLFVTMNQA. Residues 21–267 lie on the Extracellular side of the membrane; that stretch reads ISVSDPDDME…GSFSHRGNNK (247 aa). 2 Gnk2-homologous domains span residues 28-130 and 135-246; these read DMET…DKFF and ETNP…TYNS. Residues Asn39, Asn43, Asn59, Asn68, Asn89, Asn99, Asn107, Asn208, and Asn245 are each glycosylated (N-linked (GlcNAc...) asparagine). A helical membrane pass occupies residues 268 to 286; sequence LLGGMVLAVSVSVFAFLSL. Position 287 (Val287) is a topological domain, cytoplasmic.

Belongs to the cysteine-rich repeat secretory protein family.

The protein localises to the membrane. The sequence is that of Cysteine-rich repeat secretory protein 58 (CRRSP58) from Arabidopsis thaliana (Mouse-ear cress).